Here is a 116-residue protein sequence, read N- to C-terminus: Nucleoid-associated protein P9515_00191 (116 aa).

The span at 89–98 shows a compositional bias: basic and acidic residues; that stretch reads STTTMKERMN. The disordered stretch occupies residues 89–116; that stretch reads STTTMKERMNDLTGGLNLNLPGLDNNDS. The segment covering 99 to 116 has biased composition (low complexity); it reads DLTGGLNLNLPGLDNNDS.

This sequence belongs to the YbaB/EbfC family. Homodimer.

It localises to the cytoplasm. The protein resides in the nucleoid. Binds to DNA and alters its conformation. May be involved in regulation of gene expression, nucleoid organization and DNA protection. This chain is Nucleoid-associated protein P9515_00191, found in Prochlorococcus marinus (strain MIT 9515).